A 223-amino-acid polypeptide reads, in one-letter code: GRF1-interacting factor 3 (223 aa).

The disordered stretch occupies residues 179 to 223 (ANNAGPNDASGGGKPDGTNMSQSGADGQGGSAARHGGGDAKTEGK). Over residues 214 to 223 (GGGDAKTEGK) the composition is skewed to basic and acidic residues.

Belongs to the SS18 family. Interacts with GRF1. In terms of tissue distribution, predominantly expressed in shoot tips containing the shoot apical meristem (SAM) and flower buds. Also expressed in mature flowers.

Transcription coactivator that plays a role in the regulation of cell expansion in leaf and cotyledons tissues. Component of a network formed by miR396, the GRFs and their interacting factors (GIFs) acting in the regulation of meristem function, at least partially through the control of cell proliferation. GIFs are involved in the positive regulation of cell proliferation of lateral organs in a functionally redundant manner. This chain is GRF1-interacting factor 3 (GIF3), found in Arabidopsis thaliana (Mouse-ear cress).